The sequence spans 235 residues: Small ribosomal subunit protein uS2c (235 aa).

This sequence belongs to the universal ribosomal protein uS2 family.

The protein resides in the plastid. The protein localises to the chloroplast. The chain is Small ribosomal subunit protein uS2c (rps2) from Marchantia polymorpha (Common liverwort).